The primary structure comprises 325 residues: Undecaprenyl-phosphate 4-deoxy-4-formamido-L-arabinose transferase (325 aa).

Transmembrane regions (helical) follow at residues 235 to 255 and 269 to 291; these read LSVVGSVIAVSGFLLAVLLMV and VFTLFALLFIFIGAQFVAMGLLG.

This sequence belongs to the glycosyltransferase 2 family.

The protein localises to the cell inner membrane. It catalyses the reaction UDP-4-deoxy-4-formamido-beta-L-arabinose + di-trans,octa-cis-undecaprenyl phosphate = 4-deoxy-4-formamido-alpha-L-arabinopyranosyl di-trans,octa-cis-undecaprenyl phosphate + UDP. It functions in the pathway glycolipid biosynthesis; 4-amino-4-deoxy-alpha-L-arabinose undecaprenyl phosphate biosynthesis; 4-amino-4-deoxy-alpha-L-arabinose undecaprenyl phosphate from UDP-4-deoxy-4-formamido-beta-L-arabinose and undecaprenyl phosphate: step 1/2. The protein operates within bacterial outer membrane biogenesis; lipopolysaccharide biosynthesis. In terms of biological role, catalyzes the transfer of 4-deoxy-4-formamido-L-arabinose from UDP to undecaprenyl phosphate. The modified arabinose is attached to lipid A and is required for resistance to polymyxin and cationic antimicrobial peptides. Essential for virulence in insects. This chain is Undecaprenyl-phosphate 4-deoxy-4-formamido-L-arabinose transferase, found in Photorhabdus laumondii subsp. laumondii (strain DSM 15139 / CIP 105565 / TT01) (Photorhabdus luminescens subsp. laumondii).